The following is a 425-amino-acid chain: MNELTRTFFNSSVHDTDPLIAQALDDERARQKNQIELIASENIVSQAVLDALGHEMTNKTLEGYPGNRFHGGGQFVDVVEQAAIDRAKQLFNCGYANVQPHSGTQANLAVFFLLVKPGDRILSLDLAAGGHLSHGMKGNLSGRWFEAHNYNVDPQNEVINYDEMERIAEEVKPKLLITGGSAYPRELDFARMAQIAKKVGAFFMVDMAHIAGLVAGGAHPSPFPHADIVTCTTTKTLRGPRGGLILTNNEEWYKKLQTAVFPGVQGSLHSNVLAAKAICLGEALRPEFRDYVAQVVKNAKVLAETLTSRGIRIVSGGTDTHIVLLDLSSKGLNGKQAEDALARANITSNKNPIPNDSPRPAEWVGMRLGVSAATTRGMKEDEFRKLGNVVADLLEAESAGNGPEAAEKAKVTVRELTEAFPVYAH.

(6S)-5,6,7,8-tetrahydrofolate contacts are provided by residues Leu126 and 130–132; that span reads GHL. At Lys235 the chain carries N6-(pyridoxal phosphate)lysine. Position 251 (Glu251) interacts with (6S)-5,6,7,8-tetrahydrofolate.

This sequence belongs to the SHMT family. As to quaternary structure, homodimer. The cofactor is pyridoxal 5'-phosphate.

The protein localises to the cytoplasm. It carries out the reaction (6R)-5,10-methylene-5,6,7,8-tetrahydrofolate + D-alanine + H2O = 2-methylserine + (6S)-5,6,7,8-tetrahydrofolate. The protein operates within one-carbon metabolism; tetrahydrofolate interconversion. Inhibited by hydroxylamine and sodium borohydride. In terms of biological role, catalyzes the reversible interconversion of alpha-methyl-L-serine to D-alanine with tetrahydrofolate (THF) serving as the one-carbon carrier. Cannot use alpha-methyl-D-serine, L-serine, D-serine or L-alanine. The protein is 2-methylserine hydroxymethyltransferase of Paracoccus sp.